A 316-amino-acid polypeptide reads, in one-letter code: tRNA dimethylallyltransferase (316 aa).

17 to 24 (GPTASGKT) contributes to the ATP binding site. 19–24 (TASGKT) lines the substrate pocket. Interaction with substrate tRNA stretches follow at residues 42-45 (DSAL), 166-170 (QRLSR), 247-252 (RCVGYR), and 280-287 (KRQITWLR).

It belongs to the IPP transferase family. In terms of assembly, monomer. Mg(2+) serves as cofactor.

It carries out the reaction adenosine(37) in tRNA + dimethylallyl diphosphate = N(6)-dimethylallyladenosine(37) in tRNA + diphosphate. In terms of biological role, catalyzes the transfer of a dimethylallyl group onto the adenine at position 37 in tRNAs that read codons beginning with uridine, leading to the formation of N6-(dimethylallyl)adenosine (i(6)A). In Escherichia coli O157:H7, this protein is tRNA dimethylallyltransferase.